Reading from the N-terminus, the 557-residue chain is MAAQGFLLIATFLLVLMVLARPLGSGLARLINDIPLPGTTGVERVLFSTLGVSDREMNWKQYLSAILGLNILGLAVLFFMLLGQHYLPLNPQQLPGLSWDLALNTAVSFVTNTNWQSYSGETTLSYFSQMAGLTVQNFLSAASGIAVIFALIRAFTRQSMNTLGNAWVDLLRITLWVLTPVALLIALFFIQQGVLQNFLPYQAVTTIEGAQQLLPMGPVASQEAIKMLGTNGGGFFNANSSHPFENPTALTNFVQMLAIFLIPTALCFAFGEVAGDRRQGRMLLWAMSVIFVICVGVVMWAEVQGNPHLLALGADSSINMEGKESRFGVLVSSLFAVVTTAASCGAVIAMHDSFTALGGMVPMWLMQIGEVVFGGVGSGLYGMMLFVLLAVFIAGLMIGRTPEYLGKKIDVREMKLTALAILVTPTLVLMGAALAMMTDAGRSAMLNPGPHGFSEVLYAVSSAANNNGSAFAGLSANSPFWNCLLALCMFVGRFGVIIPVMAIAGSLVSKKSQPASSGTLPTHGPLFVGLLIGTVLLVGALTFIPALALGPVAEYLS.

12 consecutive transmembrane segments (helical) span residues 5-25, 63-83, 132-152, 170-190, 253-273, 283-303, 329-349, 356-376, 379-399, 416-436, 484-504, and 526-546; these read GFLL…PLGS, LSAI…MLLG, GLTV…FALI, LLRI…LFFI, FVQM…FGEV, LLWA…WAEV, VLVS…AVIA, ALGG…FGGV, GLYG…LMIG, LTAL…ALAM, LLAL…MAIA, and LFVG…FIPA.

It belongs to the KdpA family. The system is composed of three essential subunits: KdpA, KdpB and KdpC.

It is found in the cell inner membrane. Functionally, part of the high-affinity ATP-driven potassium transport (or Kdp) system, which catalyzes the hydrolysis of ATP coupled with the electrogenic transport of potassium into the cytoplasm. This subunit binds the periplasmic potassium ions and delivers the ions to the membrane domain of KdpB through an intramembrane tunnel. This is Potassium-transporting ATPase potassium-binding subunit from Escherichia coli O127:H6 (strain E2348/69 / EPEC).